The primary structure comprises 444 residues: CCA-adding enzyme (444 aa).

2 residues coordinate ATP: Ser-57 and Arg-60. CTP is bound by residues Ser-57 and Arg-60. Residues Asp-69, Asp-71, and Asp-124 each coordinate Mg(2+). ATP is bound by residues His-147, Lys-168, and Tyr-177. 3 residues coordinate CTP: His-147, Lys-168, and Tyr-177.

The protein belongs to the tRNA nucleotidyltransferase/poly(A) polymerase family. Archaeal CCA-adding enzyme subfamily. As to quaternary structure, homodimer. It depends on Mg(2+) as a cofactor.

It catalyses the reaction a tRNA precursor + 2 CTP + ATP = a tRNA with a 3' CCA end + 3 diphosphate. The enzyme catalyses a tRNA with a 3' CCA end + 2 CTP + ATP = a tRNA with a 3' CCACCA end + 3 diphosphate. In terms of biological role, catalyzes the addition and repair of the essential 3'-terminal CCA sequence in tRNAs without using a nucleic acid template. Adds these three nucleotides in the order of C, C, and A to the tRNA nucleotide-73, using CTP and ATP as substrates and producing inorganic pyrophosphate. tRNA 3'-terminal CCA addition is required both for tRNA processing and repair. Also involved in tRNA surveillance by mediating tandem CCA addition to generate a CCACCA at the 3' terminus of unstable tRNAs. While stable tRNAs receive only 3'-terminal CCA, unstable tRNAs are marked with CCACCA and rapidly degraded. The sequence is that of CCA-adding enzyme from Methanococcus maripaludis (strain C5 / ATCC BAA-1333).